The following is a 202-amino-acid chain: Kunitz trypsin inhibitor 7 (202 aa).

The first 25 residues, 1–25 (MKTFRSMLISLLLVAITTTSGVVEG), serve as a signal peptide directing secretion. A disulfide bond links Cys69 and Cys115. Asn93, Asn136, Asn144, and Asn198 each carry an N-linked (GlcNAc...) asparagine glycan.

This sequence belongs to the protease inhibitor I3 (leguminous Kunitz-type inhibitor) family.

Its function is as follows. Exhibits Kunitz trypsin protease inhibitor activity. The protein is Kunitz trypsin inhibitor 7 of Arabidopsis thaliana (Mouse-ear cress).